A 305-amino-acid polypeptide reads, in one-letter code: Acetyl-coenzyme A carboxylase carboxyl transferase subunit beta (305 aa).

One can recognise a CoA carboxyltransferase N-terminal domain in the interval Gly-23–Lys-292. Zn(2+) is bound by residues Cys-27, Cys-30, Cys-46, and Cys-49. A C4-type zinc finger spans residues Cys-27 to Cys-49. Residues Phe-281–Asn-305 form a disordered region.

The protein belongs to the AccD/PCCB family. Acetyl-CoA carboxylase is a heterohexamer composed of biotin carboxyl carrier protein (AccB), biotin carboxylase (AccC) and two subunits each of ACCase subunit alpha (AccA) and ACCase subunit beta (AccD). It depends on Zn(2+) as a cofactor.

The protein resides in the cytoplasm. The enzyme catalyses N(6)-carboxybiotinyl-L-lysyl-[protein] + acetyl-CoA = N(6)-biotinyl-L-lysyl-[protein] + malonyl-CoA. Its pathway is lipid metabolism; malonyl-CoA biosynthesis; malonyl-CoA from acetyl-CoA: step 1/1. Its function is as follows. Component of the acetyl coenzyme A carboxylase (ACC) complex. Biotin carboxylase (BC) catalyzes the carboxylation of biotin on its carrier protein (BCCP) and then the CO(2) group is transferred by the transcarboxylase to acetyl-CoA to form malonyl-CoA. This Protochlamydia amoebophila (strain UWE25) protein is Acetyl-coenzyme A carboxylase carboxyl transferase subunit beta.